We begin with the raw amino-acid sequence, 1140 residues long: Probable DNA-directed RNA polymerase II subunit RPB2 homolog (1140 aa).

Position 773 (Asp-773) interacts with Mg(2+). Residues Cys-1092, Cys-1095, Cys-1105, and Cys-1108 each coordinate Zn(2+). The C4-type zinc finger occupies Cys-1092–Cys-1108.

Belongs to the RNA polymerase beta chain family.

It catalyses the reaction RNA(n) + a ribonucleoside 5'-triphosphate = RNA(n+1) + diphosphate. Functionally, component of the DNA-dependent RNA polymerase that catalyzes the transcription of DNA into RNA using the four ribonucleoside triphosphates as substrates. Second largest component of RNA polymerase II which synthesizes mRNA precursors and many functional non-coding RNAs. Proposed to contribute to the polymerase catalytic activity and forms the polymerase active center together with the largest subunit. This Invertebrate iridescent virus 3 (IIV-3) protein is Probable DNA-directed RNA polymerase II subunit RPB2 homolog.